Reading from the N-terminus, the 1371-residue chain is Perilipin-4 (1371 aa).

Positions 1-13 (MSAPDEGRRDPPK) are enriched in basic and acidic residues. Positions 1 to 22 (MSAPDEGRRDPPKPKGKTLGSF) are disordered. A phosphoserine mark is found at S25 and S31. Positions 37-86 (ANAHSSARARPAADPTGAPAAEAAQPQAQVAAHPEQTAPWTEKELQPSEK) are disordered. A compositionally biased stretch (low complexity) spans 44-72 (RARPAADPTGAPAAEAAQPQAQVAAHPEQ). 27 tandem repeats follow at residues 109–141 (GVAS…VVSS), 142–174 (GVTG…TVST), 175–207 (GLTG…TVTT), 208–240 (GVMG…AVST), 241–273 (GLTG…TVCS), 274–306 (GVTG…TVCS), 307–339 (GVTG…TVCS), 340–372 (GVTG…TVCS), 373–405 (GVTG…TMST), 406–438 (GLTG…TVCS), 439–471 (GVTG…TVCS), 472–504 (GVTG…AVST), 505–537 (GLTG…TVCS), 538–570 (GVTS…TMST), 571–603 (GLTG…TVTT), 604–636 (GLVG…TIYS), 637–669 (GVTS…TFGS), 670–702 (GVTS…TVTT), 703–735 (GLMG…TVCS), 736–768 (GVTG…AVST), 769–801 (GLTG…AVCS), 802–834 (GVTG…TVCS), 835–867 (GVTG…TLGS), 868–900 (GVTG…AVST), 901–933 (GLTG…TVCS), 934–966 (GVTG…AVTT), and 967–999 (GVTG…TVFS). Residues 109-999 (GVASVVDVAK…LMGTKDTVFS (891 aa)) form a 27 X 33 AA approximate tandem repeat region. Polar residues predominate over residues 1060–1083 (PATSWGGLTSSRTTDNGGEQTALS). Disordered regions lie at residues 1060–1093 (PATS…SGIS) and 1240–1260 (QAPE…EDAA).

It belongs to the perilipin family.

It is found in the cell membrane. Its subcellular location is the cytoplasm. It localises to the lipid droplet. Its function is as follows. May play a role in triacylglycerol packaging into adipocytes. May function as a coat protein involved in the biogenesis of lipid droplets. The protein is Perilipin-4 of Homo sapiens (Human).